The following is a 212-amino-acid chain: 3-oxo-tetronate 4-phosphate decarboxylase (212 aa).

Glutamate 79 (proton acceptor) is an active-site residue. Zn(2+) is bound by residues glutamate 79, histidine 98, and histidine 100. Tyrosine 125 acts as the Proton donor in catalysis. Zn(2+) is bound at residue histidine 165.

Belongs to the aldolase class II family. AraD/FucA subfamily. Zn(2+) is required as a cofactor.

The enzyme catalyses 3-dehydro-4-O-phospho-D-erythronate + H(+) = dihydroxyacetone phosphate + CO2. It carries out the reaction 3-dehydro-4-O-phospho-L-erythronate + H(+) = dihydroxyacetone phosphate + CO2. Its function is as follows. Catalyzes the decarboxylation of 3-oxo-tetronate 4-phosphate to dihydroxyacetone phosphate (DHAP) and CO(2). In Escherichia coli O6:H1 (strain CFT073 / ATCC 700928 / UPEC), this protein is 3-oxo-tetronate 4-phosphate decarboxylase.